A 95-amino-acid chain; its full sequence is Aspartyl/glutamyl-tRNA(Asn/Gln) amidotransferase subunit C (95 aa).

Belongs to the GatC family. As to quaternary structure, heterotrimer of A, B and C subunits.

It catalyses the reaction L-glutamyl-tRNA(Gln) + L-glutamine + ATP + H2O = L-glutaminyl-tRNA(Gln) + L-glutamate + ADP + phosphate + H(+). It carries out the reaction L-aspartyl-tRNA(Asn) + L-glutamine + ATP + H2O = L-asparaginyl-tRNA(Asn) + L-glutamate + ADP + phosphate + 2 H(+). Allows the formation of correctly charged Asn-tRNA(Asn) or Gln-tRNA(Gln) through the transamidation of misacylated Asp-tRNA(Asn) or Glu-tRNA(Gln) in organisms which lack either or both of asparaginyl-tRNA or glutaminyl-tRNA synthetases. The reaction takes place in the presence of glutamine and ATP through an activated phospho-Asp-tRNA(Asn) or phospho-Glu-tRNA(Gln). This chain is Aspartyl/glutamyl-tRNA(Asn/Gln) amidotransferase subunit C, found in Nitrosospira multiformis (strain ATCC 25196 / NCIMB 11849 / C 71).